The sequence spans 299 residues: ATP phosphoribosyltransferase (299 aa).

Belongs to the ATP phosphoribosyltransferase family. Long subfamily. The cofactor is Mg(2+).

It is found in the cytoplasm. It catalyses the reaction 1-(5-phospho-beta-D-ribosyl)-ATP + diphosphate = 5-phospho-alpha-D-ribose 1-diphosphate + ATP. It participates in amino-acid biosynthesis; L-histidine biosynthesis; L-histidine from 5-phospho-alpha-D-ribose 1-diphosphate: step 1/9. With respect to regulation, feedback inhibited by histidine. Its function is as follows. Catalyzes the condensation of ATP and 5-phosphoribose 1-diphosphate to form N'-(5'-phosphoribosyl)-ATP (PR-ATP). Has a crucial role in the pathway because the rate of histidine biosynthesis seems to be controlled primarily by regulation of HisG enzymatic activity. The chain is ATP phosphoribosyltransferase from Shewanella halifaxensis (strain HAW-EB4).